An 89-amino-acid chain; its full sequence is MAKKSVIARNEKRKALVEKYAAKRDQLKKAGDYEALSKLPRDSASCRVRTRCVLTGRGRGVYEKFGLCRQMFRKLALEGKLPGIKKASW.

This sequence belongs to the universal ribosomal protein uS14 family. As to quaternary structure, part of the 30S ribosomal subunit. Contacts proteins S3 and S10.

Functionally, binds 16S rRNA, required for the assembly of 30S particles and may also be responsible for determining the conformation of the 16S rRNA at the A site. This chain is Small ribosomal subunit protein uS14, found in Chlorobium phaeobacteroides (strain BS1).